A 556-amino-acid chain; its full sequence is Formate--tetrahydrofolate ligase (556 aa).

Thr65 to Ser72 is a binding site for ATP.

Belongs to the formate--tetrahydrofolate ligase family.

It carries out the reaction (6S)-5,6,7,8-tetrahydrofolate + formate + ATP = (6R)-10-formyltetrahydrofolate + ADP + phosphate. It participates in one-carbon metabolism; tetrahydrofolate interconversion. This chain is Formate--tetrahydrofolate ligase, found in Streptococcus pneumoniae serotype 4 (strain ATCC BAA-334 / TIGR4).